A 71-amino-acid chain; its full sequence is Large ribosomal subunit protein bL31 (71 aa).

The protein belongs to the bacterial ribosomal protein bL31 family. Type A subfamily. In terms of assembly, part of the 50S ribosomal subunit.

Binds the 23S rRNA. This is Large ribosomal subunit protein bL31 from Metamycoplasma arthritidis (strain 158L3-1) (Mycoplasma arthritidis).